A 551-amino-acid polypeptide reads, in one-letter code: Urocanate hydratase (551 aa).

Residues 48–49 (GG), Q126, 172–174 (GMG), E192, R197, 238–239 (NA), 259–263 (QTSAH), 269–270 (YI), and Y318 contribute to the NAD(+) site. C406 is a catalytic residue. G488 lines the NAD(+) pocket.

The protein belongs to the urocanase family. NAD(+) serves as cofactor.

The protein resides in the cytoplasm. The enzyme catalyses 4-imidazolone-5-propanoate = trans-urocanate + H2O. It participates in amino-acid degradation; L-histidine degradation into L-glutamate; N-formimidoyl-L-glutamate from L-histidine: step 2/3. In terms of biological role, catalyzes the conversion of urocanate to 4-imidazolone-5-propionate. In Geobacillus kaustophilus (strain HTA426), this protein is Urocanate hydratase.